The following is a 429-amino-acid chain: MSYLFTSESVSEGHPDKVSDQISDAILDQFLATDPDSKVACETLVTTGQVVLAGEVKSRSYVDVQETARRVIEKIGYTKSEYGFDARSCGIFSSIHGQSADINRGVDRSDRSEQGAGDQGMMFGYATNETENYMPLTVDLAHHLLYELATIRKEPSSPMPYLRPDAKSQVTIEHDDEGRPVRIDTIVISTQHDEFVQASDGISEAEADRMMQERIHHDIATILIPRVKMLYKPEIAALFDEKVRLFVNPTGKFVIGGPHGDTGLTGRKIIVDTYGGRASHGGGAFSGKDPSKVDRSAAYAARHIAKNMVAAGVADEMLVQVAYAIGVAEPVSIYVNTKGRSHVALSDGQIAEKIKKIFDMRPYAIEQRLKLRNPIYEETAAYGHFGREPYEAYKTFVDEHGTEQMRIVELFTWEKLDYVNKIKAEFGLS.

His14 contributes to the ATP binding site. Residue Asp16 coordinates Mg(2+). Position 42 (Glu42) interacts with K(+). Glu55 and Gln98 together coordinate L-methionine. The tract at residues 98–108 (QSADINRGVDR) is flexible loop. Residues 165 to 167 (DAK), 252 to 253 (KF), Asp261, 267 to 268 (RK), Ala284, and Lys288 contribute to the ATP site. Asp261 is an L-methionine binding site. Residue Lys292 participates in L-methionine binding.

Belongs to the AdoMet synthase family. In terms of assembly, homotetramer; dimer of dimers. Mg(2+) serves as cofactor. It depends on K(+) as a cofactor.

The protein resides in the cytoplasm. The catalysed reaction is L-methionine + ATP + H2O = S-adenosyl-L-methionine + phosphate + diphosphate. It participates in amino-acid biosynthesis; S-adenosyl-L-methionine biosynthesis; S-adenosyl-L-methionine from L-methionine: step 1/1. In terms of biological role, catalyzes the formation of S-adenosylmethionine (AdoMet) from methionine and ATP. The overall synthetic reaction is composed of two sequential steps, AdoMet formation and the subsequent tripolyphosphate hydrolysis which occurs prior to release of AdoMet from the enzyme. The polypeptide is S-adenosylmethionine synthase (Porphyromonas gingivalis (strain ATCC 33277 / DSM 20709 / CIP 103683 / JCM 12257 / NCTC 11834 / 2561)).